Here is a 475-residue protein sequence, read N- to C-terminus: Aspartyl/glutamyl-tRNA(Asn/Gln) amidotransferase subunit B (475 aa).

It belongs to the GatB/GatE family. GatB subfamily. In terms of assembly, heterotrimer of A, B and C subunits.

It catalyses the reaction L-glutamyl-tRNA(Gln) + L-glutamine + ATP + H2O = L-glutaminyl-tRNA(Gln) + L-glutamate + ADP + phosphate + H(+). The enzyme catalyses L-aspartyl-tRNA(Asn) + L-glutamine + ATP + H2O = L-asparaginyl-tRNA(Asn) + L-glutamate + ADP + phosphate + 2 H(+). Its function is as follows. Allows the formation of correctly charged Asn-tRNA(Asn) or Gln-tRNA(Gln) through the transamidation of misacylated Asp-tRNA(Asn) or Glu-tRNA(Gln) in organisms which lack either or both of asparaginyl-tRNA or glutaminyl-tRNA synthetases. The reaction takes place in the presence of glutamine and ATP through an activated phospho-Asp-tRNA(Asn) or phospho-Glu-tRNA(Gln). The sequence is that of Aspartyl/glutamyl-tRNA(Asn/Gln) amidotransferase subunit B from Bacillus mycoides (strain KBAB4) (Bacillus weihenstephanensis).